Reading from the N-terminus, the 567-residue chain is Hexose transporter HXT9 (567 aa).

Residues 1–16 (MSGVNNTSANDLSTTE) show a composition bias toward polar residues. The disordered stretch occupies residues 1 to 45 (MSGVNNTSANDLSTTESNSNSVANAPSVKTEHNDSKNSLNLDATE). The Cytoplasmic segment spans residues 1 to 56 (MSGVNNTSANDLSTTESNSNSVANAPSVKTEHNDSKNSLNLDATEPPIDLPQKPLS). Residues 17–28 (SNSNSVANAPSV) show a composition bias toward low complexity. Residues 57–77 (AYTTVAILCLMIAFGGFIFGW) form a helical membrane-spanning segment. At 78–112 (DTGTISGFVNLSDFIRRFGQKNDKGTYYLSKVRMG) the chain is on the extracellular side. Asparagine 87 carries N-linked (GlcNAc...) asparagine glycosylation. The helical transmembrane segment at 113-133 (LIVSIFNIGCAIGGIVLSKVG) threads the bilayer. At 134–139 (DIYGRR) the chain is on the cytoplasmic side. The helical transmembrane segment at 140 to 160 (IGLITVTAIYVVGILIQITSI) threads the bilayer. Residues 161–170 (NKWYQYFIGR) are Extracellular-facing. A helical membrane pass occupies residues 171–191 (IISGLGVGGIAVLSPMLISEV). Residues 192-197 (APKQIR) are Cytoplasmic-facing. Residues 198 to 218 (GTLVQLYQLMCTMGIFLGYCT) form a helical membrane-spanning segment. At 219–232 (NYGTKNYHNATQWR) the chain is on the extracellular side. N-linked (GlcNAc...) asparagine glycosylation occurs at asparagine 227. A helical transmembrane segment spans residues 233-253 (VGLGLCFAWTTFMVSGMMFVP). Topologically, residues 254–336 (ESPRYLIEVG…IQSLQQLTGD (83 aa)) are cytoplasmic. Residues 337 to 353 (NYFFYYGTTIFKSVGLK) form a helical membrane-spanning segment. Over 354-359 (DSFQTS) the chain is Extracellular. Residues 360–377 (IIIGVVNFFSSFIAVYTI) form a helical membrane-spanning segment. The Cytoplasmic portion of the chain corresponds to 378 to 384 (ERFGRRT). A helical transmembrane segment spans residues 385–405 (CLLWGAASMLCCFAVFASVGV). Residues 406–429 (TKLWPQGSSHQDITSQGAGNCMIV) lie on the Extracellular side of the membrane. The helical transmembrane segment at 430 to 450 (FTMFFIFSFATTWAGGCYVIV) threads the bilayer. At 451 to 467 (SETFPLRVKSRGMAIAT) the chain is on the cytoplasmic side. The helical transmembrane segment at 468–488 (AANWMWGFLISFFTPFITGAI) threads the bilayer. Asparagine 489 is a topological domain (extracellular). The chain crosses the membrane as a helical span at residues 490 to 510 (FYYGYVFLGCLVFAYFYVFFF). Residues 511 to 567 (VPETKGLTLEEVNTMWLEGVPAWKSASWVPPERRTADYDADAIDHDDRPIYKRFFSS) lie on the Cytoplasmic side of the membrane.

Belongs to the major facilitator superfamily. Sugar transporter (TC 2.A.1.1) family.

The protein resides in the membrane. Its function is as follows. Probable glucose transporter. The sequence is that of Hexose transporter HXT9 (HXT9) from Saccharomyces cerevisiae (strain ATCC 204508 / S288c) (Baker's yeast).